Reading from the N-terminus, the 122-residue chain is uncharacterized protein (122 aa).

Helical transmembrane passes span 7–27 (IVAI…IFCD), 29–49 (LVLA…LGWI), 62–82 (AITG…SKNP), and 89–109 (KEIF…YFGY).

The protein localises to the cell membrane. This is an uncharacterized protein from Methanocaldococcus jannaschii (strain ATCC 43067 / DSM 2661 / JAL-1 / JCM 10045 / NBRC 100440) (Methanococcus jannaschii).